A 259-amino-acid chain; its full sequence is 3-methyl-2-oxobutanoate hydroxymethyltransferase (259 aa).

Residues Asp-44 and Asp-83 each contribute to the Mg(2+) site. 3-methyl-2-oxobutanoate-binding positions include Asp-44–Ser-45, Asp-83, and Lys-113. Residue Glu-115 participates in Mg(2+) binding. Glu-183 serves as the catalytic Proton acceptor.

Belongs to the PanB family. As to quaternary structure, homodecamer; pentamer of dimers. It depends on Mg(2+) as a cofactor.

It localises to the cytoplasm. The enzyme catalyses 3-methyl-2-oxobutanoate + (6R)-5,10-methylene-5,6,7,8-tetrahydrofolate + H2O = 2-dehydropantoate + (6S)-5,6,7,8-tetrahydrofolate. It functions in the pathway cofactor biosynthesis; (R)-pantothenate biosynthesis; (R)-pantoate from 3-methyl-2-oxobutanoate: step 1/2. Functionally, catalyzes the reversible reaction in which hydroxymethyl group from 5,10-methylenetetrahydrofolate is transferred onto alpha-ketoisovalerate to form ketopantoate. The polypeptide is 3-methyl-2-oxobutanoate hydroxymethyltransferase (Acaryochloris marina (strain MBIC 11017)).